The chain runs to 178 residues: Ribulose bisphosphate carboxylase small subunit, chloroplastic (178 aa).

A chloroplast-targeting transit peptide spans 1–54 (MASSMISSPAVTTVNRAGAGTVAPFTGLKSMAGFPTRKTNNDIASIASNGGRVQ).

It belongs to the RuBisCO small chain family. Heterohexadecamer of 8 large and 8 small subunits.

It is found in the plastid. The protein localises to the chloroplast. RuBisCO catalyzes two reactions: the carboxylation of D-ribulose 1,5-bisphosphate, the primary event in carbon dioxide fixation, as well as the oxidative fragmentation of the pentose substrate. Both reactions occur simultaneously and in competition at the same active site. Although the small subunit is not catalytic it is essential for maximal activity. The chain is Ribulose bisphosphate carboxylase small subunit, chloroplastic from Glycine tabacina.